The following is a 217-amino-acid chain: External core antigen (217 aa).

A signal peptide spans 1–20 (MYLFHLCLVFACVPCPTVQA). Residues 26 to 28 (GWL) form an HBEAG region. The segment at 166-217 (APILSTLPEHTVIRRRGGSRAARSPRRRTPSPRRRRSQSPRRRRSQSPASNC) is disordered. Basic residues predominate over residues 178–210 (IRRRGGSRAARSPRRRTPSPRRRRSQSPRRRRS). A 1; half-length repeat occupies 189–195 (SPRRRTP). Residues 189–211 (SPRRRTPSPRRRRSQSPRRRRSQ) are 3 X 8 AA repeats of S-P-R-R-R-R-S-Q. The propeptide occupies 189–217 (SPRRRTPSPRRRRSQSPRRRRSQSPASNC). 2 repeat units span residues 196–203 (SPRRRRSQ) and 204–211 (SPRRRRSQ).

It belongs to the orthohepadnavirus precore antigen family. As to quaternary structure, homodimerizes. In terms of processing, phosphorylated. Post-translationally, cleaved by host furin.

The protein localises to the secreted. It localises to the host nucleus. Its function is as follows. May regulate immune response to the intracellular capsid in acting as a T-cell tolerogen, by having an immunoregulatory effect which prevents destruction of infected cells by cytotoxic T-cells. This immune regulation may predispose to chronicity during perinatal infections and prevent severe liver injury during adult infections. The polypeptide is External core antigen (Otospermophilus beecheyi (California ground squirrel)).